Reading from the N-terminus, the 159-residue chain is Small ribosomal subunit protein bS6 (159 aa).

Non-standard amino acids (selenocysteine) are located at Sec46 and Sec52.

Belongs to the bacterial ribosomal protein bS6 family.

In terms of biological role, binds together with bS18 to 16S ribosomal RNA. The sequence is that of Small ribosomal subunit protein bS6 from Desulfotalea psychrophila (strain LSv54 / DSM 12343).